The chain runs to 1403 residues: DNA-directed RNA polymerase subunit beta' (1403 aa).

Zn(2+) contacts are provided by C71, C73, C86, and C89. Mg(2+) contacts are provided by D462, D464, and D466. Zn(2+) is bound by residues C820, C893, C900, and C903.

This sequence belongs to the RNA polymerase beta' chain family. As to quaternary structure, the RNAP catalytic core consists of 2 alpha, 1 beta, 1 beta' and 1 omega subunit. When a sigma factor is associated with the core the holoenzyme is formed, which can initiate transcription. It depends on Mg(2+) as a cofactor. The cofactor is Zn(2+).

The catalysed reaction is RNA(n) + a ribonucleoside 5'-triphosphate = RNA(n+1) + diphosphate. DNA-dependent RNA polymerase catalyzes the transcription of DNA into RNA using the four ribonucleoside triphosphates as substrates. The sequence is that of DNA-directed RNA polymerase subunit beta' from Methylobacterium radiotolerans (strain ATCC 27329 / DSM 1819 / JCM 2831 / NBRC 15690 / NCIMB 10815 / 0-1).